The following is a 319-amino-acid chain: ADP-L-glycero-D-manno-heptose-6-epimerase (319 aa).

NADP(+)-binding positions include 10 to 11, 31 to 32, Lys-38, Lys-53, and 79 to 83; these read FI, DD, and EGACS. The Proton acceptor role is filled by Tyr-144. Position 148 (Lys-148) interacts with NADP(+). Position 173 (Asn-173) interacts with substrate. NADP(+)-binding residues include Val-174 and Lys-182. The active-site Proton acceptor is Lys-182. Substrate-binding positions include Ser-184, His-191, 205–208, Arg-218, and Tyr-282; that span reads FEGC.

The protein belongs to the NAD(P)-dependent epimerase/dehydratase family. HldD subfamily. As to quaternary structure, homopentamer. The cofactor is NADP(+).

The enzyme catalyses ADP-D-glycero-beta-D-manno-heptose = ADP-L-glycero-beta-D-manno-heptose. The protein operates within nucleotide-sugar biosynthesis; ADP-L-glycero-beta-D-manno-heptose biosynthesis; ADP-L-glycero-beta-D-manno-heptose from D-glycero-beta-D-manno-heptose 7-phosphate: step 4/4. Functionally, catalyzes the interconversion between ADP-D-glycero-beta-D-manno-heptose and ADP-L-glycero-beta-D-manno-heptose via an epimerization at carbon 6 of the heptose. This Aeromonas salmonicida (strain A449) protein is ADP-L-glycero-D-manno-heptose-6-epimerase.